A 297-amino-acid chain; its full sequence is Calponin-1 (297 aa).

The region spanning 28-131 is the Calponin-homology (CH) domain; that stretch reads HQREQELREW…STLLALASMA (104 aa). 3 Calponin-like repeats span residues 164–189, 204–229, and 243–268; these read IGLQ…RHLY, ISLQ…RQIF, and VSLQ…RQVY. Position 170 is a phosphothreonine; by ROCK2 (Thr170). A Phosphoserine; by ROCK2 modification is found at Ser175. Phosphothreonine; by ROCK2 is present on residues Thr180 and Thr184. Thr259 bears the Phosphothreonine; by ROCK2 mark.

This sequence belongs to the calponin family. Part of cGMP kinase signaling complex at least composed of ACTA2/alpha-actin, CNN1/calponin H1, PLN/phospholamban, PRKG1 and ITPR1. In terms of tissue distribution, smooth muscle, and tissues containing significant amounts of smooth muscle.

Functionally, thin filament-associated protein that is implicated in the regulation and modulation of smooth muscle contraction. It is capable of binding to actin, calmodulin and tropomyosin. The interaction of calponin with actin inhibits the actomyosin Mg-ATPase activity. The polypeptide is Calponin-1 (Cnn1) (Mus musculus (Mouse)).